The sequence spans 287 residues: Phosphatidylserine decarboxylase proenzyme (287 aa).

Catalysis depends on charge relay system; for autoendoproteolytic cleavage activity residues Asp90, His147, and Ser252. Residue Ser252 is the Schiff-base intermediate with substrate; via pyruvic acid; for decarboxylase activity of the active site. Pyruvic acid (Ser); by autocatalysis is present on Ser252.

Belongs to the phosphatidylserine decarboxylase family. PSD-B subfamily. Prokaryotic type I sub-subfamily. Heterodimer of a large membrane-associated beta subunit and a small pyruvoyl-containing alpha subunit. Pyruvate serves as cofactor. Is synthesized initially as an inactive proenzyme. Formation of the active enzyme involves a self-maturation process in which the active site pyruvoyl group is generated from an internal serine residue via an autocatalytic post-translational modification. Two non-identical subunits are generated from the proenzyme in this reaction, and the pyruvate is formed at the N-terminus of the alpha chain, which is derived from the carboxyl end of the proenzyme. The autoendoproteolytic cleavage occurs by a canonical serine protease mechanism, in which the side chain hydroxyl group of the serine supplies its oxygen atom to form the C-terminus of the beta chain, while the remainder of the serine residue undergoes an oxidative deamination to produce ammonia and the pyruvoyl prosthetic group on the alpha chain. During this reaction, the Ser that is part of the protease active site of the proenzyme becomes the pyruvoyl prosthetic group, which constitutes an essential element of the active site of the mature decarboxylase.

Its subcellular location is the cell membrane. It catalyses the reaction a 1,2-diacyl-sn-glycero-3-phospho-L-serine + H(+) = a 1,2-diacyl-sn-glycero-3-phosphoethanolamine + CO2. Its pathway is phospholipid metabolism; phosphatidylethanolamine biosynthesis; phosphatidylethanolamine from CDP-diacylglycerol: step 2/2. Its function is as follows. Catalyzes the formation of phosphatidylethanolamine (PtdEtn) from phosphatidylserine (PtdSer). This chain is Phosphatidylserine decarboxylase proenzyme, found in Pseudomonas entomophila (strain L48).